Here is a 205-residue protein sequence, read N- to C-terminus: uncharacterized protein (205 aa).

Positions 72-114 are disordered; it reads ARVSPYGYESDSENEEYTRISSATSSNVLTDSPTTTQDDPTGR. The span at 90–100 shows a compositional bias: polar residues; the sequence is RISSATSSNVL. The segment covering 101–110 has biased composition (low complexity); that stretch reads TDSPTTTQDD.

This is an uncharacterized protein from Equus caballus (Horse).